The following is a 133-amino-acid chain: Protein msa (133 aa).

The next 4 helical transmembrane spans lie at 3 to 23 (YLILSLVANLLVFGVLSAIGL), 27 to 47 (ILAAMMIVLVIPIMISGILFF), 55 to 75 (YIFFNIIFIDFYYYIYNVHLM), and 103 to 123 (FGFDEILFYTLYLLLILIVLY).

It localises to the cell membrane. Accessory element involved in the expression of sarA and several virulence factors. Modulates SarA production and/or function in a strain-dependent manner. Affects the transcription of the accessory gene regulator (agr) and genes encoding virulence factors including alpha toxin (hla) and protein A (spa). The chain is Protein msa (msa) from Staphylococcus aureus (strain USA300).